Consider the following 444-residue polypeptide: MAVTTRLTWLHEKILQNHFGGKRLSLLYKGSVHGFHNGVLLDRCCNQGPTLTVIYSEDHIIGAYAEEGYQERKYASIILFALQETKISEWKLGLYTPETLFCCDVAKYNSPTNFQIDGRNRKVIMDLKTMENLGLAQNCTISIQDYEVFRCEDSLDERKIKGVIELRKSLLSALRTYEPYGSLVQQIRILLLGPIGAGKSSFFNSVRSVFQGHVTHQALVGTNTTGISEKYRTYSIRDGKDGKYLPFILCDSLGLSEKEGGLCMDDISYILNGNIRDRYQFNPMESIKLNHHDYIDSPSLKDRIHCVAFVFDASSIEYFSSQMIVKIKRIRRELVNAGVVHVALLTHVDSMDLITKGDLIEIERCVPVRSKLEEVQRKLGFALSDISVVSNYSSEWELDPVKDVLILSALRRMLWAADDFLEDLPFEQIGNLREEIINCAQGKK.

A TLDc domain is found at 1-152; that stretch reads MAVTTRLTWL…IQDYEVFRCE (152 aa).

This sequence belongs to the IFI44 family. In terms of tissue distribution, hepatocytes.

It localises to the cytoplasm. In terms of biological role, this protein aggregates to form microtubular structures. The sequence is that of Interferon-induced protein 44 (IFI44) from Pan troglodytes (Chimpanzee).